Consider the following 827-residue polypeptide: Discs large homolog 1-like protein (827 aa).

Disordered regions lie at residues 38–61 (HQDE…TPGP) and 102–133 (SPVV…ANPP). Residues 44–56 (GSPQEPSSPQFTD) are compositionally biased toward polar residues. PDZ domains are found at residues 159–246 (EITL…RRRK), 254–341 (EIKL…AKPN), and 403–484 (KVVL…QYRP). An SH3 domain is found at 518–588 (KRSLYVRALF…PSKRRVEKKE (71 aa)). Residues 595–618 (VKFNSKSREKGDNPDDMLSKGQSG) form a disordered region. In terms of domain architecture, Guanylate kinase-like spans 637–812 (SRPVIILGPM…IYDQVKQIIE (176 aa)).

The protein belongs to the MAGUK family.

It is found in the membrane. Its function is as follows. May play a role in synapse assembly and function. The sequence is that of Discs large homolog 1-like protein (dlg1l) from Danio rerio (Zebrafish).